Here is a 369-residue protein sequence, read N- to C-terminus: Deoxyhypusine synthase (369 aa).

The residue at position 78 (Ser78) is a Phosphoserine. NAD(+) contacts are provided by residues 105–109 (SNLIS), 131–133 (TAG), Glu137, and Asp238. 136 to 137 (EE) lines the spermidine pocket. A spermidine-binding site is contributed by Asp243. Gly283 lines the NAD(+) pocket. His288 contacts spermidine. 308 to 309 (TA) contributes to the NAD(+) binding site. Spermidine contacts are provided by residues 314-316 (GSD) and 323-329 (EAVSWGK). Lys329 acts as the Nucleophile in catalysis. 342-343 (DA) serves as a coordination point for NAD(+).

This sequence belongs to the deoxyhypusine synthase family. In terms of assembly, homotetramer formed by a dimer of dimers. NAD(+) is required as a cofactor.

The enzyme catalyses [eIF5A protein]-L-lysine + spermidine = [eIF5A protein]-deoxyhypusine + propane-1,3-diamine. Its pathway is protein modification; eIF5A hypusination. In terms of biological role, catalyzes the NAD-dependent oxidative cleavage of spermidine and the subsequent transfer of the butylamine moiety of spermidine to the epsilon-amino group of a critical lysine residue of the eIF-5A precursor protein to form the intermediate deoxyhypusine residue. This is the first step of the post-translational modification of that lysine into an unusual amino acid residue named hypusine. Hypusination is unique to mature eIF-5A factor and is essential for its function. This Homo sapiens (Human) protein is Deoxyhypusine synthase (DHPS).